The sequence spans 388 residues: Acetate kinase (388 aa).

Residue Asn7 participates in Mg(2+) binding. Lys14 contributes to the ATP binding site. Position 76 (Arg76) interacts with substrate. The Proton donor/acceptor role is filled by Asp133. ATP is bound by residues 193-197, 267-269, and 315-319; these read HLGNG, DMR, and GIGEN. Glu374 is a Mg(2+) binding site.

It belongs to the acetokinase family. In terms of assembly, homodimer. Mg(2+) is required as a cofactor. Mn(2+) serves as cofactor.

Its subcellular location is the cytoplasm. It carries out the reaction acetate + ATP = acetyl phosphate + ADP. Its pathway is metabolic intermediate biosynthesis; acetyl-CoA biosynthesis; acetyl-CoA from acetate: step 1/2. Functionally, catalyzes the formation of acetyl phosphate from acetate and ATP. Can also catalyze the reverse reaction. This Micrococcus luteus (strain ATCC 4698 / DSM 20030 / JCM 1464 / CCM 169 / CCUG 5858 / IAM 1056 / NBRC 3333 / NCIMB 9278 / NCTC 2665 / VKM Ac-2230) (Micrococcus lysodeikticus) protein is Acetate kinase.